The chain runs to 143 residues: Large ribosomal subunit protein uL13 (143 aa).

This sequence belongs to the universal ribosomal protein uL13 family. In terms of assembly, part of the 50S ribosomal subunit.

In terms of biological role, this protein is one of the early assembly proteins of the 50S ribosomal subunit, although it is not seen to bind rRNA by itself. It is important during the early stages of 50S assembly. The chain is Large ribosomal subunit protein uL13 from Desulfitobacterium hafniense (strain DSM 10664 / DCB-2).